Consider the following 186-residue polypeptide: ATP synthase subunit b (186 aa).

A helical transmembrane segment spans residues 5-25 (LILNLLVLLAPAAVFAAGGGH).

The protein belongs to the ATPase B chain family. F-type ATPases have 2 components, F(1) - the catalytic core - and F(0) - the membrane proton channel. F(1) has five subunits: alpha(3), beta(3), gamma(1), delta(1), epsilon(1). F(0) has three main subunits: a(1), b(2) and c(10-14). The alpha and beta chains form an alternating ring which encloses part of the gamma chain. F(1) is attached to F(0) by a central stalk formed by the gamma and epsilon chains, while a peripheral stalk is formed by the delta and b chains.

The protein resides in the cell inner membrane. F(1)F(0) ATP synthase produces ATP from ADP in the presence of a proton or sodium gradient. F-type ATPases consist of two structural domains, F(1) containing the extramembraneous catalytic core and F(0) containing the membrane proton channel, linked together by a central stalk and a peripheral stalk. During catalysis, ATP synthesis in the catalytic domain of F(1) is coupled via a rotary mechanism of the central stalk subunits to proton translocation. Its function is as follows. Component of the F(0) channel, it forms part of the peripheral stalk, linking F(1) to F(0). The polypeptide is ATP synthase subunit b (Bdellovibrio bacteriovorus (strain ATCC 15356 / DSM 50701 / NCIMB 9529 / HD100)).